The following is a 343-amino-acid chain: MYTLISIIGKYISCLPALLIVAFLTISERKTMASMQRRLGQNIVGYYGLLQAFADALKLLLKEYVAPTQANIILLFLGPIITLIFSLLGYRVIPYGSGLFISDFNLGILYILAVSSLATYGILLAGWSANSKYAFLGSLRSTAQLISYELLLRFYILLVILFTGSLNLTTIIESQKVVYFILPLLPIFLIFFIGCIAETNRAPFDLAEAESELVSGFMTEHSAVIFMIFFFLAQYASIVLICILSSVLFLGGYLNILPLNTYNVCDFNSLFSDYLINGLSSLNLAIKTAFLIFVFIWVRASFPRIRFDQLMSVCWTILLPIIIAYVVLLPCIVIGLNSSILLI.

Transmembrane regions (helical) follow at residues 4 to 24 (LISI…VAFL), 70 to 90 (ANII…LLGY), 106 to 126 (LGIL…LLAG), 154 to 174 (FYIL…IIES), 177 to 197 (VVYF…GCIA), 224 to 244 (VIFM…ICIL), 278 to 298 (GLSS…FIWV), and 316 to 336 (TILL…VIGL).

Belongs to the complex I subunit 1 family.

The protein resides in the mitochondrion inner membrane. The catalysed reaction is a ubiquinone + NADH + 5 H(+)(in) = a ubiquinol + NAD(+) + 4 H(+)(out). In terms of biological role, core subunit of the mitochondrial membrane respiratory chain NADH dehydrogenase (Complex I) that is believed to belong to the minimal assembly required for catalysis. Complex I functions in the transfer of electrons from NADH to the respiratory chain. The immediate electron acceptor for the enzyme is believed to be ubiquinone. The sequence is that of NADH-ubiquinone oxidoreductase chain 1 (ND1) from Trichophyton rubrum (Athlete's foot fungus).